A 161-amino-acid chain; its full sequence is Large ribosomal subunit protein bL17 (161 aa).

The segment covering 132 to 144 (ARAKRAEDNRKAL) has biased composition (basic and acidic residues). The tract at residues 132–161 (ARAKRAEDNRKALEAQQAQAEAETTGETKA) is disordered. Low complexity predominate over residues 145-161 (EAQQAQAEAETTGETKA).

This sequence belongs to the bacterial ribosomal protein bL17 family. In terms of assembly, part of the 50S ribosomal subunit. Contacts protein L32.

The chain is Large ribosomal subunit protein bL17 from Koribacter versatilis (strain Ellin345).